The primary structure comprises 483 residues: MERRQSICPQGRLPFYSAVVRSTSDIQASVRFASRHNLRLVIKNTGHDSAGRSSAPHSFQIHTSLLQNISLHKNFIARGSTTGRGPAVTLGAGVMQWQAYVHGAKNGYTILGGECPTVGAIGGFLQGGGVSSIHSFTRGLAVDQVLEYQVVSAKGDLITANEDNNQDLFWALKGGGGGTFGVVTEATVRVFSDDPVTVTSTKIEAAAANVLFWKEGVHELLRLLQRFNNLHVAGQLVISAPTKDSLQAGLELHFANLTDETQAIQLLRSEARALETHGISASTSVRVQRKASSELRMKPDLYPPHYGILEASVLISAATFHANDGPALIASKLSGLTLKPNDILFTSNLGGRVSENTAIEIALHPAWREAAQLVTLVRVVEPSIEGKLSALNDLTARDVPILYSIDPAAKISYRNLGDPQEKEFQARYWGADNYARLAATKAAWDPSHLFMTSLGVGSEVWDAEGICRKRRGFRAKASSLIGM.

An FAD-binding PCMH-type domain is found at 10–193 (QGRLPFYSAV…TEATVRVFSD (184 aa)).

Belongs to the oxygen-dependent FAD-linked oxidoreductase family. It depends on FAD as a cofactor.

It functions in the pathway alkaloid biosynthesis; ergot alkaloid biosynthesis. Its function is as follows. FAD-linked oxidoreductase; part of the gene cluster that mediates the biosynthesis of fungal ergot alkaloid. DmaW catalyzes the first step of ergot alkaloid biosynthesis by condensing dimethylallyl diphosphate (DMAP) and tryptophan to form 4-dimethylallyl-L-tryptophan. The second step is catalyzed by the methyltransferase easF that methylates 4-dimethylallyl-L-tryptophan in the presence of S-adenosyl-L-methionine, resulting in the formation of 4-dimethylallyl-L-abrine. The catalase easC and the FAD-dependent oxidoreductase easE then transform 4-dimethylallyl-L-abrine to chanoclavine-I which is further oxidized by easD in the presence of NAD(+), resulting in the formation of chanoclavine-I aldehyde. Agroclavine dehydrogenase easG then mediates the conversion of chanoclavine-I aldehyde to agroclavine via a non-enzymatic adduct reaction: the substrate is an iminium intermediate that is formed spontaneously from chanoclavine-I aldehyde in the presence of glutathione. The presence of easA is not required to complete this reaction. Further conversion of agroclavine to paspalic acid is a two-step process involving oxidation of agroclavine to elymoclavine and of elymoclavine to paspalic acid, the second step being performed by the elymoclavine oxidase cloA. Paspalic acid is then further converted to D-lysergic acid. Ergopeptines are assembled from D-lysergic acid and three different amino acids by the D-lysergyl-peptide-synthetases composed each of a monomudular and a trimodular nonribosomal peptide synthetase subunit. LpsB and lpsC encode the monomodular subunits responsible for D-lysergic acid activation and incorporation into the ergopeptine backbone. LpsA1 and A2 subunits encode the trimodular nonribosomal peptide synthetase assembling the tripeptide portion of ergopeptines. LpsA1 is responsible for formation of the major ergopeptine, ergotamine, and lpsA2 for alpha-ergocryptine, the minor ergopeptine of the total alkaloid mixture elaborated by C.purpurea. D-lysergyl-tripeptides are assembled by the nonribosomal peptide synthetases and released as N-(D-lysergyl-aminoacyl)-lactams. Cyclolization of the D-lysergyl-tripeptides is performed by the Fe(2+)/2-ketoglutarate-dependent dioxygenase easH which introduces a hydroxyl group into N-(D-lysergyl-aminoacyl)-lactam at alpha-C of the aminoacyl residue followed by spontaneous condensation with the terminal lactam carbonyl group. The sequence is that of FAD-linked oxidoreductase easE from Claviceps purpurea (strain 20.1) (Ergot fungus).